We begin with the raw amino-acid sequence, 266 residues long: CD82 antigen (266 aa).

The Cytoplasmic portion of the chain corresponds to 1 to 11; the sequence is MGAGCVKVTKY. Cysteine 5 carries S-palmitoyl cysteine lipidation. A helical transmembrane segment spans residues 12 to 32; the sequence is FLFLFNLLFFILGAVILGFGV. Topologically, residues 33-53 are extracellular; it reads WILADKNSFISVLQTSSSSLQ. Residues 54–72 traverse the membrane as a helical segment; the sequence is VGAYVFIGVGAITIVMGFL. Residues 73 to 83 are Cytoplasmic-facing; it reads GCIGAVNEVRC. The S-palmitoyl cysteine moiety is linked to residue cysteine 74. Residues 84 to 110 traverse the membrane as a helical segment; that stretch reads LLGLYFVFLLLILIAQVTVGVLFYFNA. The Extracellular segment spans residues 111-227; it reads DKLKKEMGNT…KAQAWLQENF (117 aa). Asparagine 127, asparagine 131, asparagine 157, and asparagine 197 each carry an N-linked (GlcNAc...) asparagine glycan. A helical membrane pass occupies residues 228 to 249; that stretch reads GILLGVCAGVAVIELLGLFLSI. At 250-266 the chain is on the cytoplasmic side; it reads CLCRYIHSEDYSKVPKY.

It belongs to the tetraspanin (TM4SF) family. In terms of assembly, forms homooligomers. Interacts directly with IGSF8. Interacts with EGFR. Interacts with VEGFA and PDGFA. Interacts with ITGA4. Interacts with ITGA6; this interaction reduces ITGA6 cell surface expression. Interacts with ITGB1. Interacts with TLR4; this interaction inhibits TLR4-mediated signaling pathway. Interacts with TLR9. Interacts with PLAUR. In terms of processing, palmitoylated. Palmitoylation contributes to oligomerization and surface expression. Highest expression in the spleen and the kidney. Low expression in skeletal muscle and in the heart.

The protein localises to the cell membrane. Its subcellular location is the cytoplasmic vesicle. The protein resides in the phagosome. Its function is as follows. Structural component of specialized membrane microdomains known as tetraspanin-enriched microdomains (TERMs), which act as platforms for receptor clustering and signaling. Participates thereby in diverse biological functions such as cell signal transduction, adhesion, migration and protein trafficking. Acts as a attenuator of EGF signaling, facilitating ligand-induced endocytosis of the receptor and its subsequent desensitization. Mechanistically, modulates ligand-induced ubiquitination and trafficking of EGFR via E3 ligase CBL phosphorylation by PKC. Increases cell-matrix adhesion by regulating the membrane organization of integrin alpha4/ITA4. Modulates adhesion and suppresses cell migration through other integrins such as the alpha6/ITGA6 and beta1/ITGB1. Decreases cell-associated plasminogen activation by interfering with the interaction between urokinase-type plasminogen activator/PLAU and its receptor PLAUR. Associates with CD4 or CD8 and delivers costimulatory signals for the TCR/CD3 pathway. Plays a role in the restrains phagocyte migration but supports macrophage activation. Plays a role in TLR9 trafficking to acidified CpG-containing compartments by controlling interaction between TLR9 and VAMP3 and subsequent myddosome assembly. Inhibits LPS-induced inflammatory response by preventing binding of LPS to TLR4 on the cell surface. Plays a role in the activation of macrophages into anti-inflammatory phenotypes. Independently of Toll-like receptor (TLR) signaling, is recruited to pathogen-containing phagosomes prior to fusion with lysosomes and participates in antigen presentation. Also acts to control angiogenesis and switch angiogenic milieu to quiescent state by binding and sequestering VEGFA and PDGFA to inhibit the signaling they trigger via their respective cell surface receptor. The sequence is that of CD82 antigen (Cd82) from Mus musculus (Mouse).